We begin with the raw amino-acid sequence, 80 residues long: U19-lycotoxin-Ls1a (80 aa).

Positions 1–22 (MSPKVQALIFIVGLITLLAAHA) are cleaved as a signal peptide. Positions 23–34 (QEELSDNIESER) are excised as a propeptide. Cystine bridges form between Cys-36-Cys-50, Cys-43-Cys-55, Cys-49-Cys-66, and Cys-57-Cys-64.

The protein belongs to the neurotoxin 02 (plectoxin) family. 05 (U19-lycotoxin) subfamily. As to expression, expressed by the venom gland.

The protein resides in the secreted. The sequence is that of U19-lycotoxin-Ls1a from Lycosa singoriensis (Wolf spider).